The sequence spans 105 residues: ATP-dependent Clp protease adapter protein ClpS (105 aa).

This sequence belongs to the ClpS family. In terms of assembly, binds to the N-terminal domain of the chaperone ClpA.

Functionally, involved in the modulation of the specificity of the ClpAP-mediated ATP-dependent protein degradation. This chain is ATP-dependent Clp protease adapter protein ClpS, found in Streptomyces avermitilis (strain ATCC 31267 / DSM 46492 / JCM 5070 / NBRC 14893 / NCIMB 12804 / NRRL 8165 / MA-4680).